We begin with the raw amino-acid sequence, 252 residues long: MQIKRWFLNNSLRNYQYLLYDKSHAIVIDPLKSDIFAEFIAKNKLQLEAILITHKHGDHIAGVKKLLAIYLNAKVYAYTGNDLFKPDIYVKDGSFINLGFTSFRVMYIPGHIDDHVCFLFEQERALFCGDTLFNAGVGGVQAESADINQLYDSLVKITKLDGDIKPYPAHDYWLGNLDFALSILADDSYFNYYRNQVAELAAEDKPIVNLAEEAKLNIFIRAMSDKALLKALPDYSLGREMFVKLRQLKNNF.

7 residues coordinate Zn(2+): H54, H56, D58, H59, H111, D130, and H170.

It belongs to the metallo-beta-lactamase superfamily. Glyoxalase II family. As to quaternary structure, monomer. It depends on Zn(2+) as a cofactor.

The enzyme catalyses an S-(2-hydroxyacyl)glutathione + H2O = a 2-hydroxy carboxylate + glutathione + H(+). It participates in secondary metabolite metabolism; methylglyoxal degradation; (R)-lactate from methylglyoxal: step 2/2. In terms of biological role, thiolesterase that catalyzes the hydrolysis of S-D-lactoyl-glutathione to form glutathione and D-lactic acid. This is Hydroxyacylglutathione hydrolase from Francisella tularensis subsp. tularensis (strain FSC 198).